Reading from the N-terminus, the 186-residue chain is MISTPLSKEFEWPAKPVSLELQHQVEQFYYREAQLLDHHAFQAWFALLAEDIHYWMPIRTVRTAREQGLEYVPAGANAHFDDTHATMYGRIRQKTSDLNWAEDPPSRTRHLVSNVIVREMDTPGTLEVASAFLLYRSRLERQVDVFAGERRDVLRIADNPLGFQIAKRTIILDQSTVLANNLSVFF.

The protein belongs to the bacterial ring-hydroxylating dioxygenase beta subunit family. Heterohexamer consisting of 3 BphA subunits and 3 BphE subunits. A ferredoxin (BphF) and a ferredoxin reductase (BphG) must be present to obtain activity.

The enzyme catalyses biphenyl + NADH + O2 + H(+) = (2R,3S)-3-phenylcyclohexa-3,5-diene-1,2-diol + NAD(+). Its pathway is xenobiotic degradation; biphenyl degradation; 2-hydroxy-2,4-pentadienoate and benzoate from biphenyl: step 1/4. Its function is as follows. The beta subunit may be responsible for the substrate specificity of the enzyme. The polypeptide is Biphenyl dioxygenase subunit beta (bphE) (Comamonas testosteroni (Pseudomonas testosteroni)).